An 811-amino-acid chain; its full sequence is Protein VAC14 homolog (811 aa).

HEAT repeat units follow at residues 81 to 119, 122 to 160, 240 to 278, 334 to 372, 375 to 412, 431 to 469, and 472 to 510; these read DSYM…VAKG, FRYF…IVMQ, ISYL…EIQK, QIDY…IAPK, LLQI…LVSK, SVDF…RTGG, and INMH…SHKS. Residues 775 to 785 are compositionally biased toward low complexity; the sequence is TSASGITTTAS. A disordered region spans residues 775-811; sequence TSASGITTTASNSRDSFITRLPPTAALSTGARKKPKQ.

This sequence belongs to the VAC14 family. As to quaternary structure, component of the PI(3,5)P2 regulatory complex, composed of ATG18, FIG4, FAB1, VAC14 and VAC7. VAC14 nucleates the assembly of the complex and serves as a scaffold.

It is found in the cytoplasm. It localises to the vacuole membrane. The PI(3,5)P2 regulatory complex regulates both the synthesis and turnover of phosphatidylinositol 3,5-bisphosphate (PtdIns(3,5)P2). Regulates the synthesis of PtdIns(3,5)P2 by positive activation of FAB1 and by controlling FIG4 localization. The chain is Protein VAC14 homolog from Schizosaccharomyces pombe (strain 972 / ATCC 24843) (Fission yeast).